Consider the following 1703-residue polypeptide: Pecanex-like protein 1 (1703 aa).

Transmembrane regions (helical) follow at residues 31 to 53 (VNAL…YMAL) and 57 to 74 (MVIV…FLLL). Basic and acidic residues predominate over residues 91–100 (VEHQTRESKG). Residues 91-126 (VEHQTRESKGSRGGTGGANDPVTRREDSNGLGDPGG) are disordered. Asn-256 carries N-linked (GlcNAc...) asparagine glycosylation. A run of 3 helical transmembrane segments spans residues 416 to 438 (VLAV…HGFF), 477 to 499 (AYSR…YGSL), and 525 to 547 (LVIV…QVNT). An N-linked (GlcNAc...) asparagine glycan is attached at Asn-564. 4 helical membrane-spanning segments follow: residues 569–591 (LLSA…CFCY), 603–622 (IPVL…YHLS), 675–697 (LIVC…FIAL), and 704–721 (VLYG…YLLP). Residues Asn-988, Asn-1129, and Asn-1391 are each glycosylated (N-linked (GlcNAc...) asparagine). Disordered regions lie at residues 1475 to 1556 (VQSG…HSIP) and 1577 to 1598 (TDPL…PTHA). Low complexity-rich tracts occupy residues 1485-1510 (ARAS…RTST) and 1518-1556 (RSST…HSIP). Residues 1582-1591 (QHHHPHHHPQ) are compositionally biased toward basic residues. The N-linked (GlcNAc...) asparagine glycan is linked to Asn-1622.

The protein belongs to the pecanex family.

Its subcellular location is the membrane. This chain is Pecanex-like protein 1, found in Takifugu rubripes (Japanese pufferfish).